The sequence spans 215 residues: UPF0502 protein YceH (215 aa).

Belongs to the UPF0502 family.

In Salmonella heidelberg (strain SL476), this protein is UPF0502 protein YceH.